An 89-amino-acid chain; its full sequence is UPF0298 protein GTNG_0961 (89 aa).

It belongs to the UPF0298 family.

It localises to the cytoplasm. This is UPF0298 protein GTNG_0961 from Geobacillus thermodenitrificans (strain NG80-2).